Reading from the N-terminus, the 1328-residue chain is Mitogen-activated protein kinase kinase kinase 19 (1328 aa).

Residues 1–19 (MSSMPKPERHAESLLDICH) show a composition bias toward basic and acidic residues. Disordered stretches follow at residues 1–28 (MSSMPKPERHAESLLDICHDTNSSPTDL), 44–74 (RSEEFDQDGDCSHSTLVNEEEDPSGGRQDWQ), 344–380 (VREEDIDCHGSKTRKPEEENSQYLSSRKNESSVAKNY), and 524–561 (QENDKHKMNSHRSKLDSKTKTSKKTPQNFVISTEGPIK). The span at 344–361 (VREEDIDCHGSKTRKPEE) shows a compositional bias: basic and acidic residues. A compositionally biased stretch (polar residues) spans 364–377 (SQYLSSRKNESSVA). The segment covering 524-542 (QENDKHKMNSHRSKLDSKT) has biased composition (basic and acidic residues). Positions 1061-1324 (WTKGEILGKG…ALQLLKHSFL (264 aa)) constitute a Protein kinase domain. Residues 1067–1075 (LGKGAYGTV) and K1089 each bind ATP. Residue D1186 is the Proton acceptor of the active site.

Belongs to the protein kinase superfamily. STE Ser/Thr protein kinase family. STE20 subfamily.

The enzyme catalyses L-seryl-[protein] + ATP = O-phospho-L-seryl-[protein] + ADP + H(+). It catalyses the reaction L-threonyl-[protein] + ATP = O-phospho-L-threonyl-[protein] + ADP + H(+). The sequence is that of Mitogen-activated protein kinase kinase kinase 19 (MAP3K19) from Homo sapiens (Human).